The sequence spans 180 residues: NAD(P)H-quinone oxidoreductase subunit I, chloroplastic (180 aa).

4Fe-4S ferredoxin-type domains follow at residues 55 to 84 (GRIHFEFDKCIACEVCVRVCPIDLPLVDWR) and 95 to 124 (LNYSIDFGVCIFCGNCVEYCPTNCLSMTEE). [4Fe-4S] cluster-binding residues include C64, C67, C70, C74, C104, C107, C110, and C114.

This sequence belongs to the complex I 23 kDa subunit family. In terms of assembly, NDH is composed of at least 16 different subunits, 5 of which are encoded in the nucleus. [4Fe-4S] cluster is required as a cofactor.

Its subcellular location is the plastid. The protein localises to the chloroplast thylakoid membrane. The enzyme catalyses a plastoquinone + NADH + (n+1) H(+)(in) = a plastoquinol + NAD(+) + n H(+)(out). It catalyses the reaction a plastoquinone + NADPH + (n+1) H(+)(in) = a plastoquinol + NADP(+) + n H(+)(out). NDH shuttles electrons from NAD(P)H:plastoquinone, via FMN and iron-sulfur (Fe-S) centers, to quinones in the photosynthetic chain and possibly in a chloroplast respiratory chain. The immediate electron acceptor for the enzyme in this species is believed to be plastoquinone. Couples the redox reaction to proton translocation, and thus conserves the redox energy in a proton gradient. The chain is NAD(P)H-quinone oxidoreductase subunit I, chloroplastic from Oryza nivara (Indian wild rice).